The sequence spans 149 residues: Probable calcium-binding protein CML25/26 (149 aa).

4 EF-hand domains span residues 1–35 (MASS…ALGE), 37–72 (VSEE…HQLQ), 77–113 (ESLR…LGSE), and 117–149 (LEME…MLMA). The Ca(2+) site is built by Asp13, Asp15, Asp17, Lys19, Glu24, Asp50, Asp52, Asp54, and Glu61. Residues Asp130, Asn132, Asp134, and Glu141 each contribute to the Ca(2+) site.

Potential calcium sensor. The sequence is that of Probable calcium-binding protein CML25/26 (CML25) from Oryza sativa subsp. japonica (Rice).